A 214-amino-acid chain; its full sequence is uncharacterized protein (214 aa).

An N-terminal signal peptide occupies residues 1-24 (MVTPHGILLLTITAAASLLWITFA). The disordered stretch occupies residues 99–121 (APNDTQEQNSTRNKRDSESYTAT). A compositionally biased stretch (polar residues) spans 100–109 (PNDTQEQNST).

Component of the acid-insoluble and acid-soluble organic matrix of the aragonitic skeleton (at protein level).

The protein resides in the secreted. This is an uncharacterized protein from Acropora millepora (Staghorn coral).